A 171-amino-acid polypeptide reads, in one-letter code: Ribosome maturation factor RimP (171 aa).

This sequence belongs to the RimP family.

The protein localises to the cytoplasm. Its function is as follows. Required for maturation of 30S ribosomal subunits. This Anaeromyxobacter dehalogenans (strain 2CP-1 / ATCC BAA-258) protein is Ribosome maturation factor RimP.